A 412-amino-acid polypeptide reads, in one-letter code: DnaJ homolog subfamily A member 2 (412 aa).

Residues 8–70 enclose the J domain; it reads KLYDILGVPP…EKRELYDRYG (63 aa). An N6-acetyllysine modification is found at K39. Phosphoserine occurs at positions 78 and 123. The CR-type zinc-finger motif lies at 130 to 214; it reads GKTTKLQLSK…CEGKKVIKEV (85 aa). K134 participates in a covalent cross-link: Glycyl lysine isopeptide (Lys-Gly) (interchain with G-Cter in SUMO2). 2 residues coordinate Zn(2+): C143 and C146. One copy of the CXXCXGXG motif repeat lies at 143–150; that stretch reads CSACSGQG. K152 bears the N6-acetyllysine mark. Zn(2+) is bound by residues C159, C162, C186, C189, C202, and C205. CXXCXGXG motif repeat units follow at residues 159-166, 186-193, and 202-209; these read CSACRGRG, CSDCNGEG, and CKKCEGKK. The disordered stretch occupies residues 359–412; sequence PEVPNIIGDTEEVELQEFDSTRGSGGGQRREAYNDSSDEESSSHHGPGVQCAHQ. Y391 bears the Phosphotyrosine mark. Phosphoserine is present on residues S394 and S395. Cysteine methyl ester is present on C409. The S-farnesyl cysteine moiety is linked to residue C409. The propeptide at 410-412 is removed in mature form; that stretch reads AHQ.

The protein localises to the membrane. Co-chaperone of Hsc70. Stimulates ATP hydrolysis and the folding of unfolded proteins mediated by HSPA1A/B (in vitro). The chain is DnaJ homolog subfamily A member 2 (DNAJA2) from Bos taurus (Bovine).